Reading from the N-terminus, the 523-residue chain is Putative oxidoreductase TDA3 (523 aa).

Low complexity predominate over residues 157–172; the sequence is NSSLSSSGSSLKNDSA. Residues 157–189 are disordered; sequence NSSLSSSGSSLKNDSASNEEEGSDIHVSSSVPS. Phosphoserine occurs at positions 189, 204, and 306.

The protein belongs to the TDA3 family. As to quaternary structure, interacts with BTN2.

The protein localises to the cytoplasm. The protein resides in the late endosome. Its function is as follows. Putative oxidoreductase that negatively regulates the retrieval of cargo from late endosomes to the Golgi. Regulates YIF1 and KEX2 localization. Required for fast DNA replication. This is Putative oxidoreductase TDA3 (TDA3) from Saccharomyces cerevisiae (strain ATCC 204508 / S288c) (Baker's yeast).